A 591-amino-acid polypeptide reads, in one-letter code: Aspartate--tRNA ligase (591 aa).

L-aspartate is bound at residue E171. Residues Q195–K198 form an aspartate region. An L-aspartate-binding site is contributed by R217. Residues R217 to E219 and Q226 each bind ATP. H448 is a binding site for L-aspartate. E482 serves as a coordination point for ATP. An L-aspartate-binding site is contributed by R489. G534–R537 serves as a coordination point for ATP.

It belongs to the class-II aminoacyl-tRNA synthetase family. Type 1 subfamily. In terms of assembly, homodimer.

Its subcellular location is the cytoplasm. It carries out the reaction tRNA(Asp) + L-aspartate + ATP = L-aspartyl-tRNA(Asp) + AMP + diphosphate. Its function is as follows. Catalyzes the attachment of L-aspartate to tRNA(Asp) in a two-step reaction: L-aspartate is first activated by ATP to form Asp-AMP and then transferred to the acceptor end of tRNA(Asp). The sequence is that of Aspartate--tRNA ligase from Edwardsiella ictaluri (strain 93-146).